A 413-amino-acid chain; its full sequence is E3 ubiquitin ligase ICP22 (413 aa).

The interval 1 to 124 (MADIPPDPPA…PPRKSKRPRI (124 aa)) is disordered. The span at 62 to 76 (GDLRGGRRRSPRELG) shows a compositional bias: basic and acidic residues. Residues 84-97 (SAESTTGTESEGTG) show a composition bias toward low complexity. Phosphotyrosine; by host is present on Tyr-189. Disordered regions lie at residues 289-334 (LETN…SASG) and 370-390 (AERS…PERE). Acidic residues predominate over residues 297–309 (SDDEISDATDSDD).

It belongs to the herpesviridae ICP22 family. Post-translationally, tyrosine phosphorylated.

It is found in the host nucleus. It participates in protein modification; protein ubiquitination. Functionally, functions as an E3 ubiquitin ligase and plays a role in the inhibition of innate immunity by preventing IFN-mediated signaling. Induces the ubiquitination and degradation of host STAT1, STAT2 and IRF9, resulting in the blockade of ISGF3 nuclear translocation. This chain is E3 ubiquitin ligase ICP22, found in Human herpesvirus 2 (strain HG52) (HHV-2).